A 603-amino-acid polypeptide reads, in one-letter code: Putative lipase atg15 (603 aa).

Topologically, residues 1 to 20 (MDQPHRRTRKWHLMDLSVST) are cytoplasmic. A helical; Signal-anchor for type II membrane protein transmembrane segment spans residues 21–41 (LLMSLALVLPSCVSAYQPVYF). Residues 42–603 (RSQEATPFIP…ITPAPILIDL (562 aa)) lie on the Lumenal side of the membrane. 5 N-linked (GlcNAc...) asparagine glycosylation sites follow: N166, N201, N223, N281, and N305. S321 functions as the Charge relay system in the catalytic mechanism. The N-linked (GlcNAc...) asparagine glycan is linked to N467.

This sequence belongs to the AB hydrolase superfamily. Lipase family. As to quaternary structure, binds to both phosphatidylinositol (PI) and phosphatidylinositol 3,5-bisphosphate (PIP2).

Its subcellular location is the endosome. It localises to the multivesicular body membrane. The protein resides in the prevacuolar compartment membrane. It catalyses the reaction a triacylglycerol + H2O = a diacylglycerol + a fatty acid + H(+). Its function is as follows. Lipase which is essential for lysis of subvacuolar cytoplasm to vacuole targeted bodies and intravacuolar autophagic bodies. Involved in the lysis of intravacuolar multivesicular body (MVB) vesicles. The intravacuolar membrane disintegration by atg15 is critical to life span extension. The protein is Putative lipase atg15 (atg15) of Emericella nidulans (strain FGSC A4 / ATCC 38163 / CBS 112.46 / NRRL 194 / M139) (Aspergillus nidulans).